Reading from the N-terminus, the 37-residue chain is Cytochrome b6-f complex subunit 5 (37 aa).

Residues 5 to 25 (LLSGIILGLIPVTLSGLLVAA) traverse the membrane as a helical segment.

It belongs to the PetG family. As to quaternary structure, the 4 large subunits of the cytochrome b6-f complex are cytochrome b6, subunit IV (17 kDa polypeptide, PetD), cytochrome f and the Rieske protein, while the 4 small subunits are PetG, PetL, PetM and PetN. The complex functions as a dimer.

The protein localises to the plastid. The protein resides in the chloroplast thylakoid membrane. Functionally, component of the cytochrome b6-f complex, which mediates electron transfer between photosystem II (PSII) and photosystem I (PSI), cyclic electron flow around PSI, and state transitions. PetG is required for either the stability or assembly of the cytochrome b6-f complex. The polypeptide is Cytochrome b6-f complex subunit 5 (Porphyra purpurea (Red seaweed)).